The sequence spans 434 residues: Adenylosuccinate synthetase (434 aa).

Residues 15-21 (GDEGKGK) and 43-45 (GHT) contribute to the GTP site. The active-site Proton acceptor is D16. Mg(2+) contacts are provided by D16 and G43. IMP is bound by residues 16-19 (DEGK), 41-44 (NAGH), T133, R147, Q228, T243, and R307. The Proton donor role is filled by H44. A substrate-binding site is contributed by 303–309 (SVTGRAR). GTP is bound by residues R309, 335 to 337 (KLD), and 418 to 420 (STG).

The protein belongs to the adenylosuccinate synthetase family. As to quaternary structure, homodimer. The cofactor is Mg(2+).

The protein resides in the cytoplasm. The enzyme catalyses IMP + L-aspartate + GTP = N(6)-(1,2-dicarboxyethyl)-AMP + GDP + phosphate + 2 H(+). It participates in purine metabolism; AMP biosynthesis via de novo pathway; AMP from IMP: step 1/2. Its function is as follows. Plays an important role in the de novo pathway of purine nucleotide biosynthesis. Catalyzes the first committed step in the biosynthesis of AMP from IMP. The protein is Adenylosuccinate synthetase of Neisseria gonorrhoeae (strain NCCP11945).